The chain runs to 276 residues: Putative pyridoxine kinase (276 aa).

ATP is bound at residue Asn-139. Residue Glu-142 participates in Mg(2+) binding. ATP-binding positions include 176–180 (KGGKA), Asp-188, Gly-213, and Lys-238.

It belongs to the ThiD family.

The catalysed reaction is pyridoxal + ATP = pyridoxal 5'-phosphate + ADP + H(+). Phosphorylates B6 vitamers; functions in a salvage pathway. Uses pyridoxal, pyridoxine, and pyridoxamine as substrates. This is Putative pyridoxine kinase (pdxK) from Staphylococcus epidermidis (strain ATCC 35984 / DSM 28319 / BCRC 17069 / CCUG 31568 / BM 3577 / RP62A).